The following is a 450-amino-acid chain: Phosphoglucosamine mutase (450 aa).

The active-site Phosphoserine intermediate is the Ser102. 4 residues coordinate Mg(2+): Ser102, Asp244, Asp246, and Asp248. Position 102 is a phosphoserine (Ser102).

This sequence belongs to the phosphohexose mutase family. Mg(2+) serves as cofactor. Activated by phosphorylation.

The catalysed reaction is alpha-D-glucosamine 1-phosphate = D-glucosamine 6-phosphate. Catalyzes the conversion of glucosamine-6-phosphate to glucosamine-1-phosphate. In Syntrophomonas wolfei subsp. wolfei (strain DSM 2245B / Goettingen), this protein is Phosphoglucosamine mutase.